A 373-amino-acid polypeptide reads, in one-letter code: sn-glycerol-3-phosphate import ATP-binding protein UgpC (373 aa).

Residues 4–235 (LTLSNITKSY…PASVFVATFI (232 aa)) enclose the ABC transporter domain. 37–44 (GPSGCGKS) is an ATP binding site.

Belongs to the ABC transporter superfamily. sn-glycerol-3-phosphate importer (TC 3.A.1.1.3) family. The complex is composed of two ATP-binding proteins (UgpC), two transmembrane proteins (UgpA and UgpE) and a solute-binding protein (UgpB).

The protein localises to the cell inner membrane. The enzyme catalyses sn-glycerol 3-phosphate(out) + ATP + H2O = sn-glycerol 3-phosphate(in) + ADP + phosphate + H(+). Functionally, part of the ABC transporter complex UgpBAEC involved in sn-glycerol-3-phosphate (G3P) import. Responsible for energy coupling to the transport system. This Psychromonas ingrahamii (strain DSM 17664 / CCUG 51855 / 37) protein is sn-glycerol-3-phosphate import ATP-binding protein UgpC.